Reading from the N-terminus, the 256-residue chain is MTNIIVNSPLDQFDIKVFIGFVSPFIDLTNINITTFTVYSVFILIVILGLTLLTDNNGRIIGNRWYVSQEAMYDTINNMVSGQIGGKLGGYYFPLIYTFFIFIFTANLIGMIPYSFAITSHMVFIISLSVVIWLGVTIIGLYTHGLTFFALFVPAGCPLALAPLLVLIELLSYSARAISLGLRLSANTLSGHLLMVILGGLVFNLMSVSIVTFVLGFIPLAGILAIVALEFAIAMIQSYVFAILASGYIKDGLYLH.

Helical transmembrane passes span 33-53, 92-112, 122-142, 148-168, 191-211, and 235-255; these read ITTF…LTLL, YFPL…IGMI, MVFI…IGLY, FFAL…LVLI, GHLL…VSIV, and MIQS…GLYL.

The protein belongs to the ATPase A chain family. In terms of assembly, F-type ATPases have 2 components, CF(1) - the catalytic core - and CF(0) - the membrane proton channel. CF(1) has five subunits: alpha(3), beta(3), gamma(1), delta(1), epsilon(1). CF(0) has three main subunits: a, b and c.

The protein resides in the mitochondrion inner membrane. Functionally, mitochondrial membrane ATP synthase (F(1)F(0) ATP synthase or Complex V) produces ATP from ADP in the presence of a proton gradient across the membrane which is generated by electron transport complexes of the respiratory chain. F-type ATPases consist of two structural domains, F(1) - containing the extramembraneous catalytic core and F(0) - containing the membrane proton channel, linked together by a central stalk and a peripheral stalk. During catalysis, ATP synthesis in the catalytic domain of F(1) is coupled via a rotary mechanism of the central stalk subunits to proton translocation. Key component of the proton channel; it may play a direct role in the translocation of protons across the membrane. The chain is ATP synthase subunit a (ATP6) from Wickerhamomyces canadensis (Yeast).